The chain runs to 241 residues: ATP-dependent dethiobiotin synthetase BioD (241 aa).

13–18 contacts ATP; the sequence is DIGKTV. Thr17 serves as a coordination point for Mg(2+). Lys38 is an active-site residue. Substrate is bound at residue Ser42. ATP-binding positions include Asp55, 116-119, and 180-181; these read EGSG and NK. Asp55 and Glu116 together coordinate Mg(2+).

The protein belongs to the dethiobiotin synthetase family. As to quaternary structure, homodimer. It depends on Mg(2+) as a cofactor.

The protein localises to the cytoplasm. It carries out the reaction (7R,8S)-7,8-diammoniononanoate + CO2 + ATP = (4R,5S)-dethiobiotin + ADP + phosphate + 3 H(+). Its pathway is cofactor biosynthesis; biotin biosynthesis; biotin from 7,8-diaminononanoate: step 1/2. In terms of biological role, catalyzes a mechanistically unusual reaction, the ATP-dependent insertion of CO2 between the N7 and N8 nitrogen atoms of 7,8-diaminopelargonic acid (DAPA, also called 7,8-diammoniononanoate) to form a ureido ring. The sequence is that of ATP-dependent dethiobiotin synthetase BioD from Clostridium kluyveri (strain NBRC 12016).